Consider the following 323-residue polypeptide: Elongation factor P--(R)-beta-lysine ligase (323 aa).

74-76 provides a ligand contact to substrate; sequence SPE. ATP is bound by residues 98-100 and Asn107; that span reads RNE. Tyr116 provides a ligand contact to substrate. ATP is bound at residue 242–243; that stretch reads EL. Glu249 contributes to the substrate binding site. Gly298 lines the ATP pocket.

It belongs to the class-II aminoacyl-tRNA synthetase family. EpmA subfamily. In terms of assembly, homodimer.

The catalysed reaction is D-beta-lysine + L-lysyl-[protein] + ATP = N(6)-((3R)-3,6-diaminohexanoyl)-L-lysyl-[protein] + AMP + diphosphate + H(+). In terms of biological role, with EpmB is involved in the beta-lysylation step of the post-translational modification of translation elongation factor P (EF-P). Catalyzes the ATP-dependent activation of (R)-beta-lysine produced by EpmB, forming a lysyl-adenylate, from which the beta-lysyl moiety is then transferred to the epsilon-amino group of a conserved specific lysine residue in EF-P. The sequence is that of Elongation factor P--(R)-beta-lysine ligase from Vibrio parahaemolyticus serotype O3:K6 (strain RIMD 2210633).